A 307-amino-acid chain; its full sequence is Serine/threonine-protein phosphatase 4 catalytic subunit (307 aa).

An N-acetylalanine modification is found at alanine 2. 4 residues coordinate Mn(2+): aspartate 54, histidine 56, aspartate 82, and asparagine 114. The active-site Proton donor is histidine 115. Histidine 164 and histidine 238 together coordinate Mn(2+). Leucine 307 carries the leucine methyl ester modification.

The protein belongs to the PPP phosphatase family. PP-4 (PP-X) subfamily. In terms of assembly, serine/threonine-protein phosphatase 4 (PP4) occurs in different assemblies of the catalytic and one or more regulatory subunits. Component of the PP4 complexes PPP4C-PPP4R1, PPP4C-PPP4R2, PPP4C-PPP4R2-PPP4R3A, PPP4C-PPP4R2-PPP4R3B and PPP4C-PPP4R4. The PPP4C-PPP4R2 complex appears to be a tetramer composed of 2 molecules of PPP4C and 2 molecules of PPP4R2. Interacts with REL, NFKB1/p50 and RELA. Interacts with SMN1 and GEMIN4. Interacts with IRS4 (phosphorylated). Interacts with SMEK1/PPP4R3A; the interaction requires PP4R2. Interacts with HDAC3. Mn(2+) serves as cofactor. In terms of processing, methylation at the C-terminal Leu-307 is critical for interactions with regulatory subunits and functions in DNA repair.

The protein resides in the cytoplasm. Its subcellular location is the nucleus. It localises to the cytoskeleton. It is found in the microtubule organizing center. The protein localises to the centrosome. It carries out the reaction O-phospho-L-seryl-[protein] + H2O = L-seryl-[protein] + phosphate. The catalysed reaction is O-phospho-L-threonyl-[protein] + H2O = L-threonyl-[protein] + phosphate. In terms of biological role, protein phosphatase that is involved in many processes such as microtubule organization at centrosomes, maturation of spliceosomal snRNPs, apoptosis, DNA repair, tumor necrosis factor (TNF)-alpha signaling, activation of c-Jun N-terminal kinase MAPK8, regulation of histone acetylation, DNA damage checkpoint signaling, NF-kappa-B activation and cell migration. The PPP4C-PPP4R1 PP4 complex may play a role in dephosphorylation and regulation of HDAC3. The PPP4C-PPP4R2-PPP4R3A PP4 complex specifically dephosphorylates H2AX phosphorylated on Ser-140 (gamma-H2AX) generated during DNA replication and required for DNA DSB repair. Dephosphorylates NDEL1 at CDK1 phosphorylation sites and negatively regulates CDK1 activity in interphase. In response to DNA damage, catalyzes RPA2 dephosphorylation, an essential step for DNA repair since it allows the efficient RPA2-mediated recruitment of RAD51 to chromatin. This Oryctolagus cuniculus (Rabbit) protein is Serine/threonine-protein phosphatase 4 catalytic subunit (PPP4C).